We begin with the raw amino-acid sequence, 942 residues long: Mitogen-activated protein kinase kinase kinase 14 (942 aa).

A compositionally biased stretch (basic residues) spans 136 to 152 (GKRHGKARKKRRKKRSK). 2 disordered regions span residues 136–156 (GKRH…SLAQ) and 291–326 (VSGQ…SCPS). Positions 402–657 (MTHQPRVGRG…ELRRKVGKAL (256 aa)) constitute a Protein kinase domain. The interval 403–655 (THQPRVGRGS…AMELRRKVGK (253 aa)) is interaction with ZFP91. ATP-binding positions include 408–416 (VGRGSFGEV) and K431. D517 (proton acceptor) is an active-site residue. T561 is modified (phosphothreonine). 2 disordered regions span residues 660–756 (VGGL…FPDR) and 801–823 (SDDS…SSGV). Pro residues predominate over residues 707–720 (EPQPPLPPEPPEPS). Positions 809–823 (SKASQSSRDTLSSGV) are enriched in polar residues.

Belongs to the protein kinase superfamily. STE Ser/Thr protein kinase family. MAP kinase kinase kinase subfamily. In terms of assembly, interacts with TRAF2, TRAF3, TRAF5, TRAF6, IKKA and NF-kappa-B2/P100. Interacts with PELI3. Interacts with NIBP; the interaction is direct. Interacts with ARRB1 and ARRB2. Interacts with GRB10. Interacts with ZFP91. Interacts with NLRP12; this interaction promotes proteasomal degradation of MAP3K14. Directly interacts with DDX3X. Interacts (via C-terminus and kinase domain) with PPPC3A (via N-terminus) and PPP3CB. In terms of processing, phosphorylation at Thr-561 is required to activate its kinase activity and 'Lys-63'-linked polyubiquitination. Phosphorylated by CHUK/IKKA leading to MAP3K14 destabilization. Autophosphorylated. Ubiquitinated. Undergoes both 'Lys-48'- and 'Lys-63'-linked polyubiquitination. 'Lys-48'-linked polyubiquitination leads to its degradation by the proteasome, while 'Lys-63'-linked polyubiquitination stabilizes and activates it.

It is found in the cytoplasm. It catalyses the reaction L-seryl-[protein] + ATP = O-phospho-L-seryl-[protein] + ADP + H(+). The enzyme catalyses L-threonyl-[protein] + ATP = O-phospho-L-threonyl-[protein] + ADP + H(+). In terms of biological role, lymphotoxin beta-activated kinase which seems to be exclusively involved in the activation of NF-kappa-B and its transcriptional activity. Phosphorylates CHUK/IKKA. Promotes proteolytic processing of NFKB2/P100, which leads to activation of NF-kappa-B via the non-canonical pathway. Has an essential role in the non-canonical NF-kappa-B signalining that regulates genes encoding molecules involved in B-cell survival, lymphoid organogenesis, and immune response. Could act in a receptor-selective manner. In Mus musculus (Mouse), this protein is Mitogen-activated protein kinase kinase kinase 14.